The chain runs to 116 residues: Ribonuclease P protein component (116 aa).

It belongs to the RnpA family. Consists of a catalytic RNA component (M1 or rnpB) and a protein subunit.

The catalysed reaction is Endonucleolytic cleavage of RNA, removing 5'-extranucleotides from tRNA precursor.. Its function is as follows. RNaseP catalyzes the removal of the 5'-leader sequence from pre-tRNA to produce the mature 5'-terminus. It can also cleave other RNA substrates such as 4.5S RNA. The protein component plays an auxiliary but essential role in vivo by binding to the 5'-leader sequence and broadening the substrate specificity of the ribozyme. This is Ribonuclease P protein component from Exiguobacterium sibiricum (strain DSM 17290 / CCUG 55495 / CIP 109462 / JCM 13490 / 255-15).